The sequence spans 218 residues: Ribose-5-phosphate isomerase A (218 aa).

Substrate is bound by residues threonine 28–threonine 31, aspartate 81–aspartate 84, and lysine 94–glycine 97. Glutamate 103 (proton acceptor) is an active-site residue. Lysine 121 is a binding site for substrate.

It belongs to the ribose 5-phosphate isomerase family. As to quaternary structure, homodimer.

The enzyme catalyses aldehydo-D-ribose 5-phosphate = D-ribulose 5-phosphate. Its pathway is carbohydrate degradation; pentose phosphate pathway; D-ribose 5-phosphate from D-ribulose 5-phosphate (non-oxidative stage): step 1/1. Its function is as follows. Catalyzes the reversible conversion of ribose-5-phosphate to ribulose 5-phosphate. The polypeptide is Ribose-5-phosphate isomerase A (Proteus mirabilis (strain HI4320)).